Consider the following 493-residue polypeptide: Inosine-5'-monophosphate dehydrogenase (493 aa).

2 consecutive CBS domains span residues 97-155 and 159-219; these read VIID…NAPI and MTSE…AKDE. NAD(+)-binding positions include aspartate 253 and 303–305; that span reads GIG. K(+) contacts are provided by glycine 305 and glycine 307. Residue serine 308 coordinates IMP. Cysteine 310 is a binding site for K(+). Cysteine 310 functions as the Thioimidate intermediate in the catalytic mechanism. IMP-binding positions include 343–345, 366–367, and 390–394; these read DGG, GS, and YRGMG. The Proton acceptor role is filled by arginine 406. Glutamate 421 is an IMP binding site. K(+) contacts are provided by glutamate 475, serine 476, and histidine 477.

This sequence belongs to the IMPDH/GMPR family. As to quaternary structure, homotetramer. The cofactor is K(+).

It carries out the reaction IMP + NAD(+) + H2O = XMP + NADH + H(+). It functions in the pathway purine metabolism; XMP biosynthesis via de novo pathway; XMP from IMP: step 1/1. Its activity is regulated as follows. Mycophenolic acid (MPA) is a non-competitive inhibitor that prevents formation of the closed enzyme conformation by binding to the same site as the amobile flap. In contrast, mizoribine monophosphate (MZP) is a competitive inhibitor that induces the closed conformation. MPA is a potent inhibitor of mammalian IMPDHs but a poor inhibitor of the bacterial enzymes. MZP is a more potent inhibitor of bacterial IMPDH. In terms of biological role, catalyzes the conversion of inosine 5'-phosphate (IMP) to xanthosine 5'-phosphate (XMP), the first committed and rate-limiting step in the de novo synthesis of guanine nucleotides, and therefore plays an important role in the regulation of cell growth. This is Inosine-5'-monophosphate dehydrogenase from Streptococcus pyogenes serotype M1.